The following is a 243-amino-acid chain: Small ribosomal subunit protein uS3 (243 aa).

The KH type-2 domain occupies 39 to 107 (IRAYLIKELK…ETHLNIVEVR (69 aa)). The tract at residues 214–243 (ASERRGLEGDAQGPASRERGDRPDRRRENA) is disordered. Basic and acidic residues predominate over residues 229–243 (SRERGDRPDRRRENA).

It belongs to the universal ribosomal protein uS3 family. As to quaternary structure, part of the 30S ribosomal subunit. Forms a tight complex with proteins S10 and S14.

In terms of biological role, binds the lower part of the 30S subunit head. Binds mRNA in the 70S ribosome, positioning it for translation. This Agrobacterium fabrum (strain C58 / ATCC 33970) (Agrobacterium tumefaciens (strain C58)) protein is Small ribosomal subunit protein uS3.